The sequence spans 101 residues: MKKAAVLAVVLSLGLAGCSKNYNDQYHGNGYRAEILFSEYNGENLTLTVRKNNCEHEDGPIETIQIGHKYDSTLVVGACVRVLDNNEGLKNISTFNPRSPL.

Positions 1 to 17 (MKKAAVLAVVLSLGLAG) are cleaved as a signal peptide. Residue cysteine 18 is the site of N-palmitoyl cysteine attachment. Cysteine 18 carries the S-diacylglycerol cysteine lipid modification.

Its subcellular location is the cell membrane. This is an uncharacterized protein from Pasteurella multocida (strain Pm70).